The primary structure comprises 193 residues: MATNLKSTAKLVKPIQYDEVIEVERIFADPAFIEQHRQRILASFKDAKESALYHELTHIVIKDNLFSCAMNAIVGYFEFNIDEAELKNVMEGLKRDVIQGAEDNTVQAIAEKIIKKALVFNHLQKEWKVEITDEVVKNVISLYYEKTNQSVREYLDDKQKFEGVRTALLEERMVLETINHFKFHFNLTGQLPN.

This is an uncharacterized protein from Mycoplasma pneumoniae (strain ATCC 29342 / M129 / Subtype 1) (Mycoplasmoides pneumoniae).